The primary structure comprises 418 residues: Tyrosine--tRNA ligase (418 aa).

Residue Y38 coordinates L-tyrosine. The short motif at 43–52 (CTAKSLHVGS) is the 'HIGH' region element. L-tyrosine contacts are provided by Y175 and Q179. Residues 235–239 (KMGKT) carry the 'KMSKS' region motif. Position 238 (K238) interacts with ATP. The 66-residue stretch at 348–413 (LPIIKLLQIS…CGKKRHLKIM (66 aa)) folds into the S4 RNA-binding domain.

Belongs to the class-I aminoacyl-tRNA synthetase family. TyrS type 1 subfamily. In terms of assembly, homodimer.

It is found in the cytoplasm. The enzyme catalyses tRNA(Tyr) + L-tyrosine + ATP = L-tyrosyl-tRNA(Tyr) + AMP + diphosphate + H(+). Its function is as follows. Catalyzes the attachment of tyrosine to tRNA(Tyr) in a two-step reaction: tyrosine is first activated by ATP to form Tyr-AMP and then transferred to the acceptor end of tRNA(Tyr). The chain is Tyrosine--tRNA ligase from Ehrlichia canis (strain Jake).